Here is a 1141-residue protein sequence, read N- to C-terminus: Tetratricopeptide repeat protein 17 (1141 aa).

The TPR 1 repeat unit spans residues 295-328; it reads FTSYYTLGNIYAMLGEYNHSVLCYDHALQARPGF. The stretch at 340-382 forms a coiled coil; sequence CQQKLEQKLEAQHRSLQRTLNELKEYQKQHDHYLRQQEILEKH. TPR repeat units follow at residues 619 to 652, 689 to 722, 1014 to 1048, 1051 to 1084, and 1085 to 1118; these read WLIL…APLQ, PLTF…TTKC, SWVL…APHQ, DVPL…APHF, and AVNH…QPEF.

This sequence belongs to the TTC17 family. In terms of assembly, interacts with CATIP. Expressed in germ cells as well as in somatic cells of the testis (at protein level).

It localises to the cytoplasm. The protein localises to the cell membrane. It is found in the cytoskeleton. Plays a role in primary ciliogenesis by modulating actin polymerization. The protein is Tetratricopeptide repeat protein 17 (TTC17) of Homo sapiens (Human).